The primary structure comprises 315 residues: Ester hydrolase C11orf54 homolog (315 aa).

3 residues coordinate Zn(2+): His266, His268, and His278.

As to quaternary structure, monomer.

It localises to the nucleus. Functionally, exhibits ester hydrolase activity on the substrate p-nitrophenyl acetate. This chain is Ester hydrolase C11orf54 homolog, found in Bos taurus (Bovine).